The sequence spans 101 residues: Nucleoid-associated protein Acid345_1974 (101 aa).

It belongs to the YbaB/EbfC family. In terms of assembly, homodimer.

It is found in the cytoplasm. The protein resides in the nucleoid. In terms of biological role, binds to DNA and alters its conformation. May be involved in regulation of gene expression, nucleoid organization and DNA protection. This Koribacter versatilis (strain Ellin345) protein is Nucleoid-associated protein Acid345_1974.